Here is a 71-residue protein sequence, read N- to C-terminus: Exodeoxyribonuclease 7 small subunit (71 aa).

Belongs to the XseB family. As to quaternary structure, heterooligomer composed of large and small subunits.

The protein resides in the cytoplasm. It catalyses the reaction Exonucleolytic cleavage in either 5'- to 3'- or 3'- to 5'-direction to yield nucleoside 5'-phosphates.. In terms of biological role, bidirectionally degrades single-stranded DNA into large acid-insoluble oligonucleotides, which are then degraded further into small acid-soluble oligonucleotides. The chain is Exodeoxyribonuclease 7 small subunit from Streptococcus agalactiae serotype Ia (strain ATCC 27591 / A909 / CDC SS700).